A 285-amino-acid polypeptide reads, in one-letter code: Protease HtpX homolog (285 aa).

2 helical membrane passes run 7–27 and 30–50; these read TAML…MIGG and GMTI…WFSD. His-131 is a Zn(2+) binding site. Residue Glu-132 is part of the active site. His-135 contributes to the Zn(2+) binding site. The next 2 membrane-spanning stretches (helical) occupy residues 146-166 and 177-197; these read ITAT…FFGG and IAGI…QMAI. Residue Glu-202 participates in Zn(2+) binding.

Belongs to the peptidase M48B family. Requires Zn(2+) as cofactor.

Its subcellular location is the cell inner membrane. The chain is Protease HtpX homolog from Burkholderia ambifaria (strain MC40-6).